The sequence spans 624 residues: Multicopper oxidase elcG (624 aa).

The N-terminal stretch at 1–18 is a signal peptide; the sequence is MACNILNFLTGLLSLSST. Plastocyanin-like domains lie at 48 to 160 and 216 to 373; these read PGRA…IERG and CMDA…TIRI. Asn-65 is a glycosylation site (N-linked (GlcNAc...) asparagine). Cu cation contacts are provided by His-96, His-98, His-140, and His-142. Asn-271, Asn-296, and Asn-464 each carry an N-linked (GlcNAc...) asparagine glycan. In terms of domain architecture, Plastocyanin-like 3 spans 474–603; sequence FLFQDPSQIE…GGMGVVILDG (130 aa). Cu cation contacts are provided by His-511, His-514, His-516, His-585, Cys-586, His-587, and His-591.

This sequence belongs to the multicopper oxidase family.

It functions in the pathway secondary metabolite biosynthesis. In terms of biological role, multicopper oxidase; part of the gene cluster that mediates the biosynthesis of elsinochrome C, a perelyenequinone phytotoxin structurally similar to cercosporin. The first step of elsinochrome C biosynthesis is performed by the polyketide synthase elcA which catalyzes the formation of nor-toralactone. The starter unit acyltransferase (SAT) domain of elcA initiates polyketide extension by the selective utilization of acetyl-CoA, which is elongated to the heptaketide in the beta-ketoacyl synthase (KS) domain by successive condensations with six malonyl units introduced by the malonyl acyltransferase (MAT) domain. The product template (PT) domain catalyzes C4-C9 and C2-C11 aldol cyclizations and dehydrations to a trihydroxynaphthalene, which is thought to be delivered to the thioesterase (TE) domain for product release. The bifunctional enzyme elcB then methylates nor-toralactone to toralactone before conducting an unusual oxidative aromatic ring opening. The next step in perylenequinone biosynthesis is an O-methylation at the nascent OH-6 of the elcB product performed by the O-methyltransferase elcD. The oxidative coupling of the two monomeric naphthol units in perylenequinone biosynthesis is catalyzed by the FAD-dependent monooxygenase elcE and the multicopper oxidase elcG. ElcG might catalyze the first intermolecular coupling in a regio- and stereo-selective manner via a phenol radical coupling mechanism and the elcE could forge the second C-C bond intramolecularly via a hydride transfer mechanism. The fasciclin domain-containing protein elcF might also play a role duting this step. The last piece of the puzzle in the biosynthesis of elsinochrome C is the additional annulation by enolate coupling to afford the dihydrobenzo(ghi)perylenequinone system, catalyzed by the FAD-dependent monooxygenase elcH. The polypeptide is Multicopper oxidase elcG (Phaeosphaeria nodorum (strain SN15 / ATCC MYA-4574 / FGSC 10173) (Glume blotch fungus)).